We begin with the raw amino-acid sequence, 245 residues long: tRNA (guanine-N(1)-)-methyltransferase (245 aa).

Residues Gly112 and 132–137 (IGDFVL) contribute to the S-adenosyl-L-methionine site.

The protein belongs to the RNA methyltransferase TrmD family. As to quaternary structure, homodimer.

It localises to the cytoplasm. The catalysed reaction is guanosine(37) in tRNA + S-adenosyl-L-methionine = N(1)-methylguanosine(37) in tRNA + S-adenosyl-L-homocysteine + H(+). In terms of biological role, specifically methylates guanosine-37 in various tRNAs. The chain is tRNA (guanine-N(1)-)-methyltransferase from Geobacter metallireducens (strain ATCC 53774 / DSM 7210 / GS-15).